A 462-amino-acid chain; its full sequence is Siroheme synthase (462 aa).

Residues 1–203 are precorrin-2 dehydrogenase /sirohydrochlorin ferrochelatase; it reads MQYFPIFVDT…GNNSKAEQMM (203 aa). Residues 22–23 and 43–44 each bind NAD(+); these read EV and PW. A Phosphoserine modification is found at S128. Residues 217 to 462 are uroporphyrinogen-III C-methyltransferase; the sequence is GEVYLVGAGP…EKLNWFGADA (246 aa). P226 provides a ligand contact to S-adenosyl-L-methionine. Residue D249 is the Proton acceptor of the active site. The active-site Proton donor is K271. Residues 302–304, I307, 332–333, M384, and A413 each bind S-adenosyl-L-methionine; these read GGD and TA.

This sequence in the N-terminal section; belongs to the precorrin-2 dehydrogenase / sirohydrochlorin ferrochelatase family. In the C-terminal section; belongs to the precorrin methyltransferase family.

It carries out the reaction uroporphyrinogen III + 2 S-adenosyl-L-methionine = precorrin-2 + 2 S-adenosyl-L-homocysteine + H(+). The enzyme catalyses precorrin-2 + NAD(+) = sirohydrochlorin + NADH + 2 H(+). The catalysed reaction is siroheme + 2 H(+) = sirohydrochlorin + Fe(2+). Its pathway is cofactor biosynthesis; adenosylcobalamin biosynthesis; precorrin-2 from uroporphyrinogen III: step 1/1. It participates in cofactor biosynthesis; adenosylcobalamin biosynthesis; sirohydrochlorin from precorrin-2: step 1/1. The protein operates within porphyrin-containing compound metabolism; siroheme biosynthesis; precorrin-2 from uroporphyrinogen III: step 1/1. It functions in the pathway porphyrin-containing compound metabolism; siroheme biosynthesis; siroheme from sirohydrochlorin: step 1/1. Its pathway is porphyrin-containing compound metabolism; siroheme biosynthesis; sirohydrochlorin from precorrin-2: step 1/1. Multifunctional enzyme that catalyzes the SAM-dependent methylations of uroporphyrinogen III at position C-2 and C-7 to form precorrin-2 via precorrin-1. Then it catalyzes the NAD-dependent ring dehydrogenation of precorrin-2 to yield sirohydrochlorin. Finally, it catalyzes the ferrochelation of sirohydrochlorin to yield siroheme. This is Siroheme synthase from Pseudoalteromonas atlantica (strain T6c / ATCC BAA-1087).